The following is a 484-amino-acid chain: Probable cytochrome P450 316a1 (484 aa).

Cysteine 433 is a binding site for heme.

It belongs to the cytochrome P450 family. The cofactor is heme.

It localises to the endoplasmic reticulum membrane. It is found in the microsome membrane. In terms of biological role, may be involved in the metabolism of insect hormones and in the breakdown of synthetic insecticides. This Drosophila melanogaster (Fruit fly) protein is Probable cytochrome P450 316a1 (Cyp316a1).